Here is a 387-residue protein sequence, read N- to C-terminus: Monomeric sarcosine oxidase (387 aa).

FAD is bound at residue 6–36 (DVIVVGAGSMGMAAGYYLAKQGVKTLLVDSF). C316 is modified (S-8alpha-FAD cysteine).

It belongs to the MSOX/MTOX family. MSOX subfamily. Monomer. FAD serves as cofactor.

It localises to the cytoplasm. It catalyses the reaction sarcosine + O2 + H2O = formaldehyde + glycine + H2O2. Functionally, catalyzes the oxidative demethylation of sarcosine. The sequence is that of Monomeric sarcosine oxidase (soxA) from Bacillus sp. (strain NS-129).